Reading from the N-terminus, the 94-residue chain is Endoribonuclease VapD 2 (94 aa).

Belongs to the VapD ribonuclease family. In terms of assembly, homodimer.

Its function is as follows. Cleaves ssRNA, mostly between U:A. The protein is Endoribonuclease VapD 2 of Riemerella anatipestifer (Moraxella anatipestifer).